Consider the following 1181-residue polypeptide: Putative primase (1181 aa).

Residues 1141 to 1181 (RSHSTMVEHDMDDDESTNKKQELEEEDEECIDIDEYNNERF) form a disordered region. Positions 1163-1181 (LEEEDEECIDIDEYNNERF) are enriched in acidic residues.

The protein belongs to the eukaryotic-type primase small subunit family.

Synthesizes small RNA primers for the Okazaki fragments on both template strands at replication forks during viral DNA synthesis. The protein is Putative primase of Magallana gigas (Pacific oyster).